A 144-amino-acid chain; its full sequence is Large ribosomal subunit protein uL13 (144 aa).

This sequence belongs to the universal ribosomal protein uL13 family. In terms of assembly, part of the 50S ribosomal subunit.

In terms of biological role, this protein is one of the early assembly proteins of the 50S ribosomal subunit, although it is not seen to bind rRNA by itself. It is important during the early stages of 50S assembly. This is Large ribosomal subunit protein uL13 from Desulfovibrio desulfuricans (strain ATCC 27774 / DSM 6949 / MB).